Here is a 91-residue protein sequence, read N- to C-terminus: MITNYEATVVTTDDIVHEVNLEGKRIGYVIKTENKETPFTVVDIDGPSGNVKTLDEGVKKMCLVHIGKNLPAEKKAEFLATLIAMKLKGEI.

The polypeptide is Protein RacC (racC) (Escherichia coli (strain K12)).